The chain runs to 996 residues: Sodium/potassium-transporting ATPase subunit alpha-A (996 aa).

Helical transmembrane passes span 73–93 (LFGGFQMLLWIGSILCFIAYT) and 107–123 (LYLGLALLFVVIMTGCF). The interval 191-211 (DNSSLTGESEPQSRSTECTND) is disordered. The next 2 helical transmembrane spans lie at 268-290 (FIHIITAMAVSLAAVFAVISFLY) and 297-325 (AAIFMIGIIVAKVPEGLLATVTVCLTLTA). Asp-353 acts as the 4-aspartylphosphate intermediate in catalysis. An ATP-binding site is contributed by Lys-483. 2 residues coordinate Mg(2+): Asp-692 and Asp-696. The next 4 membrane-spanning stretches (helical) occupy residues 762 to 785 (LSPFLMYILFDLPLAIGTVTILCI), 820 to 847 (ERLISMAYGQIGVMQAFGGFFTYFVIMG), 889 to 909 (YTCHTAFFISIVIVQWTDLII), and 926 to 951 (TLNFALVFETCVAAFLSYTPGMDKGL).

The protein belongs to the cation transport ATPase (P-type) (TC 3.A.3) family. Type IIC subfamily. As to quaternary structure, the sodium/potassium-transporting ATPase is composed of a catalytic alpha subunit, an auxiliary non-catalytic beta subunit and an additional regulatory subunit.

It localises to the cell membrane. The enzyme catalyses K(+)(out) + Na(+)(in) + ATP + H2O = K(+)(in) + Na(+)(out) + ADP + phosphate + H(+). Its function is as follows. This is the catalytic component of the active enzyme, which catalyzes the hydrolysis of ATP coupled with the exchange of sodium and potassium ions across the plasma membrane. This action creates the electrochemical gradient of sodium and potassium ions, providing the energy for active transport of various nutrients. This is Sodium/potassium-transporting ATPase subunit alpha-A from Artemia franciscana (Brine shrimp).